We begin with the raw amino-acid sequence, 604 residues long: Glutamine--fructose-6-phosphate aminotransferase [isomerizing] (604 aa).

Catalysis depends on Cys2, which acts as the Nucleophile; for GATase activity. Positions 2–219 (CGIMGAVSER…EGDSACVTTQ (218 aa)) constitute a Glutamine amidotransferase type-2 domain. SIS domains follow at residues 279–427 (LRAS…DNRA) and 454–594 (LASL…VDQP). Lys599 acts as the For Fru-6P isomerization activity in catalysis.

As to quaternary structure, homodimer.

It is found in the cytoplasm. The enzyme catalyses D-fructose 6-phosphate + L-glutamine = D-glucosamine 6-phosphate + L-glutamate. Functionally, catalyzes the first step in hexosamine metabolism, converting fructose-6P into glucosamine-6P using glutamine as a nitrogen source. The chain is Glutamine--fructose-6-phosphate aminotransferase [isomerizing] from Legionella pneumophila (strain Paris).